A 202-amino-acid polypeptide reads, in one-letter code: ATP-dependent Clp protease proteolytic subunit 3 (202 aa).

Catalysis depends on Ser-93, which acts as the Nucleophile. His-118 is an active-site residue.

Belongs to the peptidase S14 family. As to quaternary structure, fourteen ClpP subunits assemble into 2 heptameric rings which stack back to back to give a disk-like structure with a central cavity, resembling the structure of eukaryotic proteasomes.

The protein localises to the cytoplasm. The enzyme catalyses Hydrolysis of proteins to small peptides in the presence of ATP and magnesium. alpha-casein is the usual test substrate. In the absence of ATP, only oligopeptides shorter than five residues are hydrolyzed (such as succinyl-Leu-Tyr-|-NHMec, and Leu-Tyr-Leu-|-Tyr-Trp, in which cleavage of the -Tyr-|-Leu- and -Tyr-|-Trp bonds also occurs).. Cleaves peptides in various proteins in a process that requires ATP hydrolysis. Has a chymotrypsin-like activity. Plays a major role in the degradation of misfolded proteins. This is ATP-dependent Clp protease proteolytic subunit 3 from Rhodococcus jostii (strain RHA1).